Consider the following 105-residue polypeptide: Met repressor (105 aa).

It belongs to the MetJ family. Homodimer.

The protein localises to the cytoplasm. This regulatory protein, when combined with SAM (S-adenosylmethionine) represses the expression of the methionine regulon and of enzymes involved in SAM synthesis. This chain is Met repressor, found in Haemophilus ducreyi (strain 35000HP / ATCC 700724).